The following is a 326-amino-acid chain: ATP synthase gamma chain (326 aa).

Belongs to the ATPase gamma chain family. In terms of assembly, F-type ATPases have 2 components, CF(1) - the catalytic core - and CF(0) - the membrane proton channel. CF(1) has five subunits: alpha(3), beta(3), gamma(1), delta(1), epsilon(1). CF(0) has three main subunits: a, b and c.

It localises to the cell membrane. Functionally, produces ATP from ADP in the presence of a proton gradient across the membrane. The gamma chain is believed to be important in regulating ATPase activity and the flow of protons through the CF(0) complex. This chain is ATP synthase gamma chain, found in Rhodococcus jostii (strain RHA1).